A 174-amino-acid chain; its full sequence is Gamma-crystallin D (174 aa).

2 Beta/gamma crystallin 'Greek key' domains span residues 2-40 (GKITLYEDRGFQGRHYECSSDHPNLQPYLSRCNSARVDS) and 41-83 (GCWM…RLIP). A connecting peptide region spans residues 84-87 (HSGS). Beta/gamma crystallin 'Greek key' domains are found at residues 88 to 128 (HRIR…NVLE) and 129 to 171 (GSWV…RRVI).

It belongs to the beta/gamma-crystallin family. In terms of assembly, monomer.

Its function is as follows. Crystallins are the dominant structural components of the vertebrate eye lens. The chain is Gamma-crystallin D (CRYGD) from Homo sapiens (Human).